We begin with the raw amino-acid sequence, 308 residues long: Zinc finger CCCH domain-containing protein 15 (308 aa).

The segment at 1–21 (MENKIAPFSYSGSSAGNSSSG) is disordered. Residues 9–21 (SYSGSSAGNSSSG) are compositionally biased toward low complexity. Residues 56–91 (TRLHEASLEAEALRLENTELRSMNLRLKNELNSLIR) are a coiled coil. The interval 110-190 (LSIGGNDADE…GTVTKPGTCG (81 aa)) is disordered. Ser111 carries the phosphoserine modification. Polar residues predominate over residues 148 to 164 (RSSLPKSISVRSNGYSK). C3H1-type zinc fingers lie at residues 222-250 (MTKTELCNKWQETGTCPYGDHCQFAHGIK) and 260-288 (RYKTEVCRMVLAGDNCPYGHRCHFRHSLS).

Post-translationally, phosphorylated at Ser-111 by ASK7/BIN2 in the cytoplasm in the absence of brassinosteroids (BRs). As to expression, highly expressed in secondary cell wall-forming tissues and the xylem cells of roots. Expressed predominantly in inflorescence stems, flowers and siliques. Highly expressed in the basal portion of stems, where cells are undergoing secondary cell wall thickening. Highly expressed in meiocytes and tapetum from anthers.

It is found in the cytoplasm. The protein resides in the nucleus. In terms of biological role, functions probably as a transcriptional factor that activates genes involved in secondary cell wall biosynthesis. Functions redudantly with C3H14 to regulate secondary cell wall formation. C3H14 and C3H15 have overlapping roles in the regulation of secondary cell wall formation and anther development. C3H14 may contribute more to secondary cell wall thickening while C3H15 could be more important in anther development. May regulate at both the transcriptional and post-transcriptional levels the expression of many genes involved in various biological processes, particularly those associated with cell wall metabolism and pollen development. Involved in the regulation of callose metabolism in male meiocytes, in integrity of newly formed microspores, and promotes male fertility. May be involved in the regulation of the callose synthesis genes CALS5 and CALS12, the potential degradation of callose walls-related genes A6 and MYB80, as well as other putative beta-1,3-glucanase genes. Negatively regulates cell elongation by inhibiting brassinosteroid (BR) signaling. Functions downstream of the BRI1 receptor as a negative regulator in the BR pathway. This Arabidopsis thaliana (Mouse-ear cress) protein is Zinc finger CCCH domain-containing protein 15.